The following is a 148-amino-acid chain: Caltractin (148 aa).

EF-hand domains follow at residues 4–39, 40–75, 77–112, and 113–148; these read EQKQ…LGFE, PKKE…KMGE, DSRE…LGEN, and LTDE…TSLF. Ca(2+)-binding residues include aspartate 17, aspartate 19, serine 21, threonine 23, glutamate 28, aspartate 53, aspartate 55, serine 57, threonine 59, and glutamate 64. Positions 126, 128, 130, 132, and 137 each coordinate Ca(2+).

This sequence belongs to the centrin family. Ubiquitous.

This calcium-binding protein is found in the basal body complexes (the functional homolog of the centrosome in animal cell). In mitotic cells it is specifically associated with the poles of the mitotic spindles at the sites of the duplicated basal body complexes. This is Caltractin from Spermatozopsis similis (Green alga).